The primary structure comprises 360 residues: Magnesium-protoporphyrin IX monomethyl ester [oxidative] cyclase (360 aa).

Residues 1–20 (MVPPTAIAEASRSGGEPAIK) are disordered.

It belongs to the AcsF family. Fe cation serves as cofactor.

The catalysed reaction is Mg-protoporphyrin IX 13-monomethyl ester + 3 NADPH + 3 O2 + 2 H(+) = 3,8-divinyl protochlorophyllide a + 3 NADP(+) + 5 H2O. The protein operates within porphyrin-containing compound metabolism; chlorophyll biosynthesis (light-independent). Catalyzes the formation of the isocyclic ring in chlorophyll biosynthesis. Mediates the cyclase reaction, which results in the formation of divinylprotochlorophyllide (Pchlide) characteristic of all chlorophylls from magnesium-protoporphyrin IX 13-monomethyl ester (MgPMME). The polypeptide is Magnesium-protoporphyrin IX monomethyl ester [oxidative] cyclase (Synechococcus sp. (strain RCC307)).